We begin with the raw amino-acid sequence, 34 residues long: Dermaseptin-H5 (34 aa).

In terms of tissue distribution, expressed by the skin glands.

The protein resides in the secreted. Has antimicrobial activity. The protein is Dermaseptin-H5 of Pithecopus hypochondrialis (Orange-legged leaf frog).